The sequence spans 1470 residues: MFVKNFIHKLKELKQKSLDKFANLLYDYGGYVYDRPCTFIICSLICCLLLTCGFYFKEHEKDIYKLYSISNSYAYETNETINDFFYKSRRCFILVESNVNLLKPKILRELQKFEEGTKDIEVDLSEINECKTNSELPPEQSHVAKELYKTLIQRSEENLKSGKINGSLFDYSDLDENGKSVLSLAGKENNDDTLIEGDNKNDEETSANNNNNEDDNNEDDNNEDDNNEDDNNENDNNNNNEDDNNNDDDDDEDNEEEDEEKQKSLREKLYRKIYEMLKKKKENIVLDENNPNVNFTDYKDDVFYPYQYIPPMLIKADRCKLQNVFGDKNLNIDLREASDGLKKQITYTLEDICEKKYGDCNFSSLFLYYEKGNGYIDYPIKVDNLDFYVNRRTYKEMMFKGILGNMVYEKSGSKYIIKSANAIMTVIPLLNSHTYEPYALAYEKKLIDYVRFYNLDDIIQDEETNDDNDPFIRFHVFTDRSLEDEVDRISKIDNLTRLLLLIGVLLIFMYALFNNVTSVLYRSKPLCAVMGIFCGFLGFLSGSGFLYFLGVKSVPPAETVPFLVIGVGVDDVFVILNSYSLLFMVKDNKKRIQMCLKDSALAITVTTLTNIIAFLISAISPFYSICAFSLFTASSLFFGYLMVLTFLLSFLCIEAKLEKKKRNIFTGTFHLFRSIFMKSSKKNKKENKENNIHDDGDNDNDEKKKDLSLEVKNNEDDYENISIYEWIHNLYLFEESINKKKKNAALVYASNNGMSSNLNNVNEDGFPNPSKIVSMEDVKKRNIKKDDAYINKEDEEGGGYYNKDDNKKKDILGKKQKKNNNNVTLVSKKGEDNELDVYYENLDEKTNDKYKMNNIKSSKLKYDNDKKDGAIINNRPSSDEEYKEEKDKNKINILNDVFNDITIKPNENILLDRGDVIKSSGYDSSYNDLQSSSLPNPSSNEVLNKTTMVYNETDLKDNKKEIKSSKKNVKDIKKSDMIHDDTYDIINSNNKNILLSSNEINNNSNNTNKFNNNSTELATKDTQQFINGHDKNIYLLSSHDNALFYKYIYEEPKGNIGKYFRSLVKNYYVPFLSSRFGKTIVYIMFTIIIAMSIYGCTLMKKGIKYDKAFPVDSYVRRFTTAKIKYFPDFGDFIEVYYFDKHFINKYRGLEKNTKEAASSFLYSDLTDRQIMNSPKINKNVHWENTNLQEELINMHNTLESQEFVTSVANGFTFFLNKNKSSLRKENPQEFYEIFANWLKKDFVGNLFKNDFVFLNGKLVAWRFHYFQKNVDDSEISSKWLKACKQITKLENHNVQMVCFHLSSIFNETDESIIEVTLINLGITILTILVVTAYIIKGFYSCVIIALIIFLIDLCIFGFMCLCGITMNIISMVILVLSVGFSIDHTSHIVQAFSHSMGRTRDEKMKESLHLMIGPVLHSGLSTWFVISTLFFSNKDFTVIFFQTLSLVLFFSITFSSMFLPVLLSSFGPLH.

Topologically, residues 1 to 3 (MFV) are cytoplasmic. The stretch at 4–34 (KNFIHKLKELKQKSLDKFANLLYDYGGYVYD) is an intramembrane region. Position 35 (Arg-35) is a topological domain, cytoplasmic. The helical transmembrane segment at 36–56 (PCTFIICSLICCLLLTCGFYF) threads the bilayer. The Extracellular portion of the chain corresponds to 57 to 493 (KEHEKDIYKL…DEVDRISKID (437 aa)). N-linked (GlcNAc...) asparagine glycosylation is found at Asn-78, Asn-165, Asn-294, and Asn-361. A helical transmembrane segment spans residues 494-514 (NLTRLLLLIGVLLIFMYALFN). One can recognise an SSD domain in the interval 494–653 (NLTRLLLLIG…LTFLLSFLCI (160 aa)). At 515–524 (NVTSVLYRSK) the chain is on the cytoplasmic side. The helical transmembrane segment at 525 to 549 (PLCAVMGIFCGFLGFLSGSGFLYFL) threads the bilayer. Residues 550 to 554 (GVKSV) are Extracellular-facing. The chain crosses the membrane as a helical span at residues 555–582 (PPAETVPFLVIGVGVDDVFVILNSYSLL). Residues 583-587 (FMVKD) lie on the Cytoplasmic side of the membrane. Residues 588–619 (NKKRIQMCLKDSALAITVTTLTNIIAFLISAI) form a helical membrane-spanning segment. At 620–622 (SPF) the chain is on the extracellular side. Residues 623–659 (YSICAFSLFTASSLFFGYLMVLTFLLSFLCIEAKLEK) traverse the membrane as a helical segment. Topologically, residues 660–663 (KKRN) are cytoplasmic. Residues 664–673 (IFTGTFHLFR) lie within the membrane without spanning it. Residues 674–1057 (SIFMKSSKKN…IYEEPKGNIG (384 aa)) are Cytoplasmic-facing. The stretch at 1058 to 1073 (KYFRSLVKNYYVPFLS) is an intramembrane region. Position 1074 (Ser-1074) is a topological domain, cytoplasmic. The helical transmembrane segment at 1075–1098 (RFGKTIVYIMFTIIIAMSIYGCTL) threads the bilayer. The Extracellular portion of the chain corresponds to 1099–1300 (MKKGIKYDKA…NHNVQMVCFH (202 aa)). N-linked (GlcNAc...) asparagine glycosylation occurs at Asn-1218. A helical transmembrane segment spans residues 1301–1334 (LSSIFNETDESIIEVTLINLGITILTILVVTAYI). Over 1335 to 1337 (IKG) the chain is Cytoplasmic. The chain crosses the membrane as a helical span at residues 1338–1361 (FYSCVIIALIIFLIDLCIFGFMCL). Over 1362 to 1367 (CGITMN) the chain is Extracellular. Residues 1368–1394 (IISMVILVLSVGFSIDHTSHIVQAFSH) form a helical membrane-spanning segment. The Cytoplasmic portion of the chain corresponds to 1395–1399 (SMGRT). The chain crosses the membrane as a helical span at residues 1400–1431 (RDEKMKESLHLMIGPVLHSGLSTWFVISTLFF). Topologically, residues 1432–1434 (SNK) are extracellular. The chain crosses the membrane as a helical span at residues 1435–1466 (DFTVIFFQTLSLVLFFSITFSSMFLPVLLSSF). Residues 1467-1470 (GPLH) are Cytoplasmic-facing.

The protein belongs to the patched family.

It localises to the cell membrane. The catalysed reaction is cholesterol(in) = cholesterol(out). Functionally, facilitates cholesterol efflux from membranes in a pH-dependent manner. Required for maintaining normal parasite plasma membrane lipid composition. Required for the proper functioning of digestive vacuole. Required for the viability of blood-stage parasites. The sequence is that of Niemann-Pick type C1-related protein from Plasmodium falciparum (isolate 3D7).